The sequence spans 150 residues: Macrodomain Ter protein (150 aa).

It belongs to the MatP family. Homodimer.

It localises to the cytoplasm. Required for spatial organization of the terminus region of the chromosome (Ter macrodomain) during the cell cycle. Prevents early segregation of duplicated Ter macrodomains during cell division. Binds specifically to matS, which is a 13 bp signature motif repeated within the Ter macrodomain. The polypeptide is Macrodomain Ter protein (Shigella boydii serotype 18 (strain CDC 3083-94 / BS512)).